Reading from the N-terminus, the 369-residue chain is Peptide chain release factor 2 (369 aa).

Position 250 is an N5-methylglutamine (Q250).

This sequence belongs to the prokaryotic/mitochondrial release factor family. Post-translationally, methylated by PrmC. Methylation increases the termination efficiency of RF2.

The protein resides in the cytoplasm. Peptide chain release factor 2 directs the termination of translation in response to the peptide chain termination codons UGA and UAA. The protein is Peptide chain release factor 2 (prfB) of Rickettsia typhi (strain ATCC VR-144 / Wilmington).